The primary structure comprises 128 residues: NHP2-like protein 1 (128 aa).

Position 1 is an N-acetylmethionine (methionine 1). An N-acetylthreonine; in NHP2-like protein 1, N-terminally processed modification is found at threonine 2. Position 21 is an N6-acetyllysine (lysine 21). Positions 36–48 (RKGANEATKTLNR) are interaction with U4 snRNA and U4atac snRNA. The tract at residues 96–128 (SRPVIACSVTIKEGSQLKQQIQSIQQSIERLLV) is important for U4 snRNA-binding. Serine 122 is subject to Phosphoserine.

The protein belongs to the eukaryotic ribosomal protein eL8 family. Identified in the spliceosome B complex. Component of the U4/U6-U5 tri-snRNP complex composed of the U4, U6 and U5 snRNAs and at least PRPF3, PRPF4, PRPF6, PRPF8, PRPF31, SNRNP200, TXNL4A, WDR57, SNRNP40, DDX23, CD2BP2, PPIH, NHP2L1, EFTUD2, SART1 and USP39. Interacts with RAD17 and PRPF31. The complex formed by SNU13 and PRPF31 binds U4 snRNA. The complex formed by SNU13 and PRPF31 also binds U4atac snRNA, a characteristic component of specific, less abundant spliceosomal complexes. Part of the small subunit (SSU) processome, composed of more than 70 proteins and the RNA chaperone small nucleolar RNA (snoRNA) U3. Core component of box C/D small nucleolar ribonucleoprotein (snoRNP) particles; the core proteins SNU13, NOP56, NOP58 and FBL or FBLL1 assemble stepwise onto the snoRNA.

Its subcellular location is the nucleus. The protein resides in the nucleolus. Part of the small subunit (SSU) processome, first precursor of the small eukaryotic ribosomal subunit. During the assembly of the SSU processome in the nucleolus, many ribosome biogenesis factors, an RNA chaperone and ribosomal proteins associate with the nascent pre-rRNA and work in concert to generate RNA folding, modifications, rearrangements and cleavage as well as targeted degradation of pre-ribosomal RNA by the RNA exosome. Involved in pre-mRNA splicing as component of the spliceosome. Binds to the 5'-stem-loop of U4 snRNA and thereby contributes to spliceosome assembly. The protein undergoes a conformational change upon RNA-binding. Core component of box C/D small nucleolar ribonucleoprotein (snoRNP) complexes that function in methylation of multiple sites on ribosomal RNAs (rRNAs) and messenger RNAs (mRNAs). The protein is NHP2-like protein 1 of Bos taurus (Bovine).